We begin with the raw amino-acid sequence, 784 residues long: Toll-like receptor 2 (784 aa).

An N-terminal signal peptide occupies residues 1–20 (MPHALWTVWVLGAVISLSKE). Residues 21–587 (GVPDQPSSLS…THLSVSECHR (567 aa)) lie on the Extracellular side of the membrane. A disulfide bond links cysteine 31 and cysteine 37. LRR repeat units lie at residues 54 to 77 (AVKS…WKCV), 78 to 101 (NLKA…SSLR), 102 to 125 (SLEH…RPLS), 126 to 150 (SLKF…SHLT), 151 to 175 (NLRI…GLTF), 176 to 199 (LEEL…SIQN), 200 to 223 (ISHL…TLSS), 224 to 250 (LEYL…TNTL), 251 to 278 (IKKF…YISG), 279 to 308 (VSEA…VIGK), 309 to 337 (LETL…LTER), 338 to 361 (VKRI…HLKS), 362 to 388 (LEYL…AWPS), 389 to 414 (LQTL…TLKN), 415 to 437 (LTKL…WPEK), 438 to 457 (MKYL…CIPQ), 458 to 478 (TLEV…ILPQ), 479 to 500 (VKEL…FLPM), and 501 to 524 (LLVM…SFQK). The N-linked (GlcNAc...) asparagine glycan is linked to asparagine 115. Residue asparagine 199 is glycosylated (N-linked (GlcNAc...) asparagine). A disulfide bond links cysteine 353 and cysteine 382. A glycan (N-linked (GlcNAc...) asparagine) is linked at asparagine 414. An intrachain disulfide couples cysteine 432 to cysteine 454. Residue asparagine 442 is glycosylated (N-linked (GlcNAc...) asparagine). The LRRCT domain maps to 525 to 579 (LKTLEAGGNNFICSCEFLSFTQEEQALDQILIDWPENYLCDSPSHVRGQRVQDTH). Residues 588-608 (TALVSAVCCALFLSILLTGVL) form a helical membrane-spanning segment. Residues 609–784 (CHHFHGLWYM…WLNLRAAIKS (176 aa)) are Cytoplasmic-facing. A TIR domain is found at 639-782 (ICYDAFVSYS…GFWLNLRAAI (144 aa)). Lysine 754 is covalently cross-linked (Glycyl lysine isopeptide (Lys-Gly) (interchain with G-Cter in ubiquitin)). The ATG16L1-binding motif motif lies at 761–778 (YLEWPTDEAQQEGFWLNL).

It belongs to the Toll-like receptor family. As to quaternary structure, interacts with LY96, TLR1 and TLR6 (via extracellular domain). TLR2 seems to exist in heterodimers with either TLR1 or TLR6 before stimulation by the ligand. The heterodimers form bigger oligomers in response to their corresponding ligands as well as further heterotypic associations with other receptors such as CD14 and/or CD36. Binds MYD88 (via TIR domain). Interacts with TICAM1. Interacts with CNPY3. Interacts with ATG16L1. Interacts with PPP1R11. Interacts with TICAM2. Interacts with TIRAP. Ubiquitinated at Lys-754 by PPP1R11, leading to its degradation. Deubiquitinated by USP2. In terms of processing, glycosylation of Asn-442 is critical for secretion of the N-terminal ectodomain of TLR2.

The protein resides in the membrane. It localises to the cytoplasmic vesicle. Its subcellular location is the phagosome membrane. The protein localises to the membrane raft. Functionally, cooperates with LY96 to mediate the innate immune response to bacterial lipoproteins and other microbial cell wall components. Cooperates with TLR1 or TLR6 to mediate the innate immune response to bacterial lipoproteins or lipopeptides. Acts via MYD88 and TRAF6, leading to NF-kappa-B activation, cytokine secretion and the inflammatory response. May also promote apoptosis in response to lipoproteins. Forms activation clusters composed of several receptors depending on the ligand, these clusters trigger signaling from the cell surface and subsequently are targeted to the Golgi in a lipid-raft dependent pathway. Forms the cluster TLR2:TLR6:CD14:CD36 in response to diacylated lipopeptides and TLR2:TLR1:CD14 in response to triacylated lipopeptides. The protein is Toll-like receptor 2 (TLR2) of Equus caballus (Horse).